Consider the following 484-residue polypeptide: F-box/LRR-repeat protein At3g59210 (484 aa).

One can recognise an F-box domain in the interval 6-54; that stretch reads KDIINCLPDNLLCQILSNLSTKEAALTSLLSKRWRYLFALVPNLDFDVL. 5 LRR repeats span residues 144-170, 172-197, 205-234, 303-334, and 335-360; these read KIGP…NLDS, VFEE…SLLN, SCSV…SFDT, TLYL…TIES, and HPEL…VFQG.

In Arabidopsis thaliana (Mouse-ear cress), this protein is F-box/LRR-repeat protein At3g59210.